Reading from the N-terminus, the 413-residue chain is Tyrosine--tRNA ligase (413 aa).

Residues 60–69 (PTAPDIHIGH) carry the 'HIGH' region motif. The 'KMSKS' region motif lies at 244-248 (KMSKS). K247 provides a ligand contact to ATP. The S4 RNA-binding domain maps to 352 to 412 (LGIAQLLKQA…GKRRFARVTL (61 aa)).

Belongs to the class-I aminoacyl-tRNA synthetase family. TyrS type 2 subfamily. As to quaternary structure, homodimer.

It is found in the cytoplasm. The catalysed reaction is tRNA(Tyr) + L-tyrosine + ATP = L-tyrosyl-tRNA(Tyr) + AMP + diphosphate + H(+). In terms of biological role, catalyzes the attachment of tyrosine to tRNA(Tyr) in a two-step reaction: tyrosine is first activated by ATP to form Tyr-AMP and then transferred to the acceptor end of tRNA(Tyr). The polypeptide is Tyrosine--tRNA ligase (Cupriavidus pinatubonensis (strain JMP 134 / LMG 1197) (Cupriavidus necator (strain JMP 134))).